Here is a 692-residue protein sequence, read N- to C-terminus: Elongation factor G (692 aa).

The tr-type G domain maps to 8-283 (NRIRNIGIAA…AVIDYLPAPT (276 aa)). GTP is bound by residues 17–24 (AHIDAGKT), 81–85 (DTPGH), and 135–138 (NKMD).

Belongs to the TRAFAC class translation factor GTPase superfamily. Classic translation factor GTPase family. EF-G/EF-2 subfamily.

Its subcellular location is the cytoplasm. Its function is as follows. Catalyzes the GTP-dependent ribosomal translocation step during translation elongation. During this step, the ribosome changes from the pre-translocational (PRE) to the post-translocational (POST) state as the newly formed A-site-bound peptidyl-tRNA and P-site-bound deacylated tRNA move to the P and E sites, respectively. Catalyzes the coordinated movement of the two tRNA molecules, the mRNA and conformational changes in the ribosome. The polypeptide is Elongation factor G (Helicobacter pylori (strain HPAG1)).